The following is a 150-amino-acid chain: UPF0506 protein SJCHGC02381 (150 aa).

An N-terminal signal peptide occupies residues Met1 to Ser18. N-linked (GlcNAc...) asparagine glycans are attached at residues Asn20, Asn24, Asn32, Asn36, Asn48, Asn52, Asn64, and Asn110. The disordered stretch occupies residues Thr22 to Glu49. The span at Asn36–Glu49 shows a compositional bias: acidic residues. 3 cysteine pairs are disulfide-bonded: Cys116-Cys130, Cys123-Cys134, and Cys129-Cys139.

The protein belongs to the UPF0506 family.

It is found in the secreted. The protein is UPF0506 protein SJCHGC02381 of Schistosoma japonicum (Blood fluke).